The primary structure comprises 334 residues: Glutamyl-tRNA reductase (334 aa).

Residues 49-52 (TCNR), serine 107, 112-114 (EDQ), and glutamine 118 contribute to the substrate site. Cysteine 50 serves as the catalytic Nucleophile. 186–191 (GNGEMG) contributes to the NADP(+) binding site.

This sequence belongs to the glutamyl-tRNA reductase family. Homodimer.

The enzyme catalyses (S)-4-amino-5-oxopentanoate + tRNA(Glu) + NADP(+) = L-glutamyl-tRNA(Glu) + NADPH + H(+). Its pathway is porphyrin-containing compound metabolism; protoporphyrin-IX biosynthesis; 5-aminolevulinate from L-glutamyl-tRNA(Glu): step 1/2. Catalyzes the NADPH-dependent reduction of glutamyl-tRNA(Glu) to glutamate 1-semialdehyde (GSA). The chain is Glutamyl-tRNA reductase from Alkaliphilus oremlandii (strain OhILAs) (Clostridium oremlandii (strain OhILAs)).